We begin with the raw amino-acid sequence, 101 residues long: Ribonuclease kappa-A (101 aa).

2 consecutive transmembrane segments (helical) span residues 13–33 (ACGIVISVWGVIMLILLGVFF) and 68–88 (VSYNCFIAAAIYIVLGGFSFC).

This sequence belongs to the RNase K family.

The protein resides in the membrane. Its function is as follows. Endoribonuclease which preferentially cleaves ApU and ApG phosphodiester bonds. The sequence is that of Ribonuclease kappa-A (rnasek-a) from Xenopus laevis (African clawed frog).